A 367-amino-acid polypeptide reads, in one-letter code: Pyrimidine monooxygenase RutA (367 aa).

FMN contacts are provided by residues 50-51 (IK), asparagine 116, glutamate 125, 141-142 (RY), and serine 191.

This sequence belongs to the NtaA/SnaA/DszA monooxygenase family. RutA subfamily.

The enzyme catalyses uracil + FMNH2 + NADH + O2 = (Z)-3-ureidoacrylate + FMN + NAD(+) + H2O + H(+). It catalyses the reaction thymine + FMNH2 + NADH + O2 = (Z)-2-methylureidoacrylate + FMN + NAD(+) + H2O + H(+). Catalyzes the pyrimidine ring opening between N-3 and C-4 by an unusual flavin hydroperoxide-catalyzed mechanism, adding oxygen atoms in the process to yield ureidoacrylate peracid, that immediately reacts with FMN forming ureidoacrylate and FMN-N(5)-oxide. The FMN-N(5)-oxide reacts spontaneously with NADH to produce FMN. Requires the flavin reductase RutF to regenerate FMN in vivo. This chain is Pyrimidine monooxygenase RutA, found in Allorhizobium ampelinum (strain ATCC BAA-846 / DSM 112012 / S4) (Agrobacterium vitis (strain S4)).